Here is a 122-residue protein sequence, read N- to C-terminus: MAPNTSRKQKVIKTLTVDVSSPTENGVFDPASYSKYLIDHIKVDGAVGNLGNAIEVTEDGSIVTVVSSAKFSGKYLKYLTKKYLKKNQLRDWIRFVSIRQNQYKLVFYQVTPEDADEEEDDE.

Belongs to the eukaryotic ribosomal protein eL22 family. In terms of assembly, component of the large ribosomal subunit (LSU). Mature yeast ribosomes consist of a small (40S) and a large (60S) subunit. The 40S small subunit contains 1 molecule of ribosomal RNA (18S rRNA) and 33 different proteins (encoded by 57 genes). The large 60S subunit contains 3 rRNA molecules (25S, 5.8S and 5S rRNA) and 46 different proteins (encoded by 81 genes).

The protein resides in the cytoplasm. Component of the ribosome, a large ribonucleoprotein complex responsible for the synthesis of proteins in the cell. The small ribosomal subunit (SSU) binds messenger RNAs (mRNAs) and translates the encoded message by selecting cognate aminoacyl-transfer RNA (tRNA) molecules. The large subunit (LSU) contains the ribosomal catalytic site termed the peptidyl transferase center (PTC), which catalyzes the formation of peptide bonds, thereby polymerizing the amino acids delivered by tRNAs into a polypeptide chain. The nascent polypeptides leave the ribosome through a tunnel in the LSU and interact with protein factors that function in enzymatic processing, targeting, and the membrane insertion of nascent chains at the exit of the ribosomal tunnel. The sequence is that of Large ribosomal subunit protein eL22B from Saccharomyces cerevisiae (strain ATCC 204508 / S288c) (Baker's yeast).